The chain runs to 224 residues: Transcriptional regulatory protein TctD (224 aa).

The Response regulatory domain maps to 2 to 116 (RLLLAEDNRE…ELDARLRALL (115 aa)). Asp51 is modified (4-aspartylphosphate). Residues 121–219 (GQVHEVQQLG…LRGLGYVLER (99 aa)) constitute a DNA-binding region (ompR/PhoB-type).

Functionally, transcriptional activator of the tctI tricarboxylate transport system operon. The sequence is that of Transcriptional regulatory protein TctD (tctD) from Salmonella typhimurium (strain SL1344).